Here is a 182-residue protein sequence, read N- to C-terminus: Large ribosomal subunit protein uL22 (182 aa).

Residues Ser-155–Gln-182 are disordered.

Belongs to the universal ribosomal protein uL22 family.

This Carabus granulatus (Ground beetle) protein is Large ribosomal subunit protein uL22 (RpL17).